Here is a 180-residue protein sequence, read N- to C-terminus: ATP-dependent protease subunit HslV (180 aa).

T9 is an active-site residue. Residues A164, C167, and T170 each contribute to the Na(+) site.

The protein belongs to the peptidase T1B family. HslV subfamily. In terms of assembly, a double ring-shaped homohexamer of HslV is capped on each side by a ring-shaped HslU homohexamer. The assembly of the HslU/HslV complex is dependent on binding of ATP.

It localises to the cytoplasm. The enzyme catalyses ATP-dependent cleavage of peptide bonds with broad specificity.. Its activity is regulated as follows. Allosterically activated by HslU binding. In terms of biological role, protease subunit of a proteasome-like degradation complex believed to be a general protein degrading machinery. The sequence is that of ATP-dependent protease subunit HslV from Leptospira interrogans serogroup Icterohaemorrhagiae serovar Lai (strain 56601).